Here is a 120-residue protein sequence, read N- to C-terminus: Large ribosomal subunit protein bL12 (120 aa).

Belongs to the bacterial ribosomal protein bL12 family. As to quaternary structure, homodimer. Part of the ribosomal stalk of the 50S ribosomal subunit. Forms a multimeric L10(L12)X complex, where L10 forms an elongated spine to which 2 to 4 L12 dimers bind in a sequential fashion. Binds GTP-bound translation factors.

Functionally, forms part of the ribosomal stalk which helps the ribosome interact with GTP-bound translation factors. Is thus essential for accurate translation. The protein is Large ribosomal subunit protein bL12 of Lactobacillus acidophilus (strain ATCC 700396 / NCK56 / N2 / NCFM).